We begin with the raw amino-acid sequence, 183 residues long: Endoribonuclease YbeY (183 aa).

His-142, His-146, and His-152 together coordinate Zn(2+).

The protein belongs to the endoribonuclease YbeY family. The cofactor is Zn(2+).

The protein resides in the cytoplasm. Its function is as follows. Single strand-specific metallo-endoribonuclease involved in late-stage 70S ribosome quality control and in maturation of the 3' terminus of the 16S rRNA. The sequence is that of Endoribonuclease YbeY from Trichodesmium erythraeum (strain IMS101).